Consider the following 935-residue polypeptide: Potassium channel AKT1 (935 aa).

At 1 to 106 (MARWGAARMA…YDRRYRIWET (106 aa)) the chain is on the cytoplasmic side. The helical transmembrane segment at 107–127 (FLIVLVVYSAWVSPFEFGFIP) threads the bilayer. The Extracellular portion of the chain corresponds to 128–136 (KPTGALATA). A helical transmembrane segment spans residues 137 to 157 (DNVVNAFFAVDIILTFFVAYL). Residues 158–178 (DKMSYMLEDDPKKIAWRYSTT) lie on the Cytoplasmic side of the membrane. The helical transmembrane segment at 179-199 (WLVLDVASTIPSEFARRILPS) threads the bilayer. Residues 200-205 (KLRSYG) lie on the Extracellular side of the membrane. Residues 206–226 (FFNMLRLWRLRRVSSLFSRLE) form a helical; Voltage-sensor membrane-spanning segment. The Cytoplasmic segment spans residues 227-240 (KDRHFNYFWVRCAK). Residues 241–261 (LICVTLFAVHCAACFYYLLAD) form a helical membrane-spanning segment. The Extracellular segment spans residues 262–288 (RYPVPTSTWIGNYMADFHERSLWIRYV). Residues 289–308 (TSVYWSITTLTTVGYGDLHA) constitute an intramembrane region (pore-forming). Topologically, residues 309–312 (ENTR) are extracellular. The helical transmembrane segment at 313–333 (EMIFNIFYMLFNLGLTAYLIG) threads the bilayer. Over 334 to 935 (NMTNLVVHGT…WDAEKMKGKS (602 aa)) the chain is Cytoplasmic. 419–538 (LFQGVSNDLI…TIIMNNLIQF (120 aa)) lines the a nucleoside 3',5'-cyclic phosphate pocket. ANK repeat units lie at residues 565–594 (DLPITLCFAVTRGDDFLLHQLLKRGMDPNE), 598–627 (DGHTALHIAASKGNEQCVRLLLEYGADPNA), 631–660 (EGKVPLWEALCEKHAAVVQLLVEGGADLSS), 662–691 (DTGLYACIAVEESDTELLNDIIHYGGDVNR), 695–724 (DGTTALHRAVCDGNVQMAELLLEHGADIDK), and 728–757 (NGWTPRALAEQQGHDDIQLLFRSRKAATAS). The tract at residues 826 to 854 (SQAQRETDHPLSRGGLAATGSPNPSSGSR) is disordered. Residues 845-854 (GSPNPSSGSR) are compositionally biased toward polar residues. The KHA domain occupies 859–935 (RVTISCPEKG…WDAEKMKGKS (77 aa)).

This sequence belongs to the potassium channel family. Plant (TC 1.A.1.4) subfamily. As to quaternary structure, the potassium channel is probably a homo- or heterotetrameric complex of pore-forming subunits. As to expression, expressed in roots and coleoptile of young seedlings.

The protein resides in the membrane. In terms of biological role, highly selective inward-rectifying potassium channel that mediates potassium uptake by plant roots. Assuming opened or closed conformations in response to the voltage difference across the membrane, the channel is activated by hyperpolarization. May be a major salt-sensitive potassium channel in roots. The polypeptide is Potassium channel AKT1 (AKT1) (Oryza sativa subsp. japonica (Rice)).